A 768-amino-acid polypeptide reads, in one-letter code: DNA replication licensing factor MCM3 homolog 2 (768 aa).

An MCM domain is found at 290–497 (TFDLLGNSLA…IDRQISEHVA (208 aa)). 340 to 347 (GDPSVAKS) is a binding site for ATP. The Arginine finger motif lies at 472-475 (SRFD). Residues 661 to 670 (EMKQQADHDA) show a composition bias toward basic and acidic residues. A disordered region spans residues 661 to 689 (EMKQQADHDAGATGGTVDGHGSSGNDPMD). Gly residues predominate over residues 672 to 682 (ATGGTVDGHGS).

Belongs to the MCM family.

The protein resides in the nucleus. The catalysed reaction is ATP + H2O = ADP + phosphate + H(+). In terms of biological role, acts as a factor that allows the DNA to undergo a single round of replication per cell cycle. Required for DNA replication and cell proliferation. May act as a component of the MCM complex which is the putative replicative helicase of the replication licensing system in eukaryotic cells. This is DNA replication licensing factor MCM3 homolog 2 (ROA2) from Zea mays (Maize).